Consider the following 274-residue polypeptide: Proteasome subunit beta (274 aa).

The propeptide at 1–52 is removed in mature form; by autocatalysis; sequence MPDPTGVAGRLPAVFMTPGTSSFTDFLSVAAPDLLPGARGPLPAPVTDAAHG. The active-site Nucleophile is Thr-53.

The protein belongs to the peptidase T1B family. In terms of assembly, the 20S proteasome core is composed of 14 alpha and 14 beta subunits that assemble into four stacked heptameric rings, resulting in a barrel-shaped structure. The two inner rings, each composed of seven catalytic beta subunits, are sandwiched by two outer rings, each composed of seven alpha subunits. The catalytic chamber with the active sites is on the inside of the barrel. Has a gated structure, the ends of the cylinder being occluded by the N-termini of the alpha-subunits. Is capped by the proteasome-associated ATPase, ARC.

It is found in the cytoplasm. It catalyses the reaction Cleavage of peptide bonds with very broad specificity.. It functions in the pathway protein degradation; proteasomal Pup-dependent pathway. With respect to regulation, the formation of the proteasomal ATPase ARC-20S proteasome complex, likely via the docking of the C-termini of ARC into the intersubunit pockets in the alpha-rings, may trigger opening of the gate for substrate entry. Interconversion between the open-gate and close-gate conformations leads to a dynamic regulation of the 20S proteasome proteolysis activity. Functionally, component of the proteasome core, a large protease complex with broad specificity involved in protein degradation. This chain is Proteasome subunit beta, found in Parafrankia sp. (strain EAN1pec).